A 74-amino-acid chain; its full sequence is Conotoxin ca17a (74 aa).

A signal peptide spans 1–20 (MQKATVLLLALLLLLPLSTA). A propeptide spanning residues 21-40 (QDAEGSQEDAAQREVDIATR) is cleaved from the precursor. Pro-51 carries the post-translational modification 4-hydroxyproline.

Contains disulfide bonds. As to expression, expressed by the venom gland.

It is found in the secreted. The chain is Conotoxin ca17a from Conus caracteristicus (Characteristic cone).